The following is a 111-amino-acid chain: Universal stress protein B (111 aa).

2 consecutive transmembrane segments (helical) span residues 1–21 and 90–110; these read MISTVSLFWALCVVCVINMAR and FILTSALCGLVAIGLIGLAIW.

This sequence belongs to the universal stress protein B family.

It localises to the cell inner membrane. This is Universal stress protein B from Erwinia tasmaniensis (strain DSM 17950 / CFBP 7177 / CIP 109463 / NCPPB 4357 / Et1/99).